A 545-amino-acid chain; its full sequence is MAAKEVKFGRSAREKMLRGVDILADAVKVTLGPKGRNVVIDKSFGAPRITKDGVSVAKEIELEDKFENMGAQMVREVASKTNDIAGDGTTTATVLAQAIVREGAKAVAAGMNPMDLKRGIDLAVAEVVKDLLAKAKKINTSDEVAQVGTISANGEKQIGLDIAEAMQKVGNEGVITVEEAKTAETELEVVEGMQFDRGYLSPYFVTNPEKMVADLEDAYILLHEKKLSNLQAMLPVLEAVVQTGKPLLIIAEDVEGEALATLVVNKLRGGLKIAAVKAPGFGDRRKAMLEDIAILTGGTVISEDLGIKLESVTLDMLGRAKKVSITKENTTIVDGAGQKSDIEGRVAQIKAQIEETTSDYDREKLQERLAKLAGGVAVIRVGGATEVEVKEKKDRIDDALNATRAAVQEGIVPGGGVALLRSSVKITVKGENDDQDAGVNIVRRALQSPARQIVENAGDEASIVVGKILEKDTDDFGYNAQTGEYGDMIAMGIIDPVKVVRTALQDAASVASLLITTEAMIAELPKKDAPAMPGGMGGMGGMDMM.

Residues 30–33 (TLGP), Lys-51, 87–91 (DGTTT), Gly-415, and Asp-495 each bind ATP.

This sequence belongs to the chaperonin (HSP60) family. As to quaternary structure, forms a cylinder of 14 subunits composed of two heptameric rings stacked back-to-back. Interacts with the co-chaperonin GroES.

The protein resides in the cytoplasm. The enzyme catalyses ATP + H2O + a folded polypeptide = ADP + phosphate + an unfolded polypeptide.. Together with its co-chaperonin GroES, plays an essential role in assisting protein folding. The GroEL-GroES system forms a nano-cage that allows encapsulation of the non-native substrate proteins and provides a physical environment optimized to promote and accelerate protein folding. This is Chaperonin GroEL 1 from Sinorhizobium medicae (strain WSM419) (Ensifer medicae).